Consider the following 363-residue polypeptide: Type-2 angiotensin II receptor (363 aa).

Over 1–45 the chain is Extracellular; sequence MKDNFSFAATSRNITSSRPFDNLNATGTNESAFNCSHKPSDKHLE. Asn4, Asn13, Asn24, Asn29, and Asn34 each carry an N-linked (GlcNAc...) asparagine glycan. Intrachain disulfides connect Cys35/Cys290 and Cys117/Cys195. A helical membrane pass occupies residues 46–70; it reads AIPVLYYMIFVIGFAVNIVVVSLFC. The Cytoplasmic portion of the chain corresponds to 71–80; it reads CQKGPKKVSS. A helical membrane pass occupies residues 81–104; sequence IYIFNLALADLLLLATLPLWATYY. Angiotensin II-binding residues include Tyr103 and Tyr104. The Extracellular segment spans residues 105-114; sequence SYRYDWLFGP. Residues 115-140 traverse the membrane as a helical segment; that stretch reads VMCKVFGSFLTLNMFASIFFITCMSV. At 141–159 the chain is on the cytoplasmic side; the sequence is DRYQSVIYPFLSQRRNPWQ. The chain crosses the membrane as a helical span at residues 160–181; it reads ASYVVPLVWCMACLSSLPTFYF. Arg182, Tyr204, and Lys215 together coordinate angiotensin II. Residues 182–206 are Extracellular-facing; the sequence is RDVRTIEYLGVNACIMAFPPEKYAQ. Residues 207 to 232 form a helical membrane-spanning segment; that stretch reads WSAGIALMKNILGFIIPLIFIATCYF. The Cytoplasmic segment spans residues 233 to 257; it reads GIRKHLLKTNSYGKNRITRDQVLKM. Residues 258–281 form a helical membrane-spanning segment; it reads AAAVVLAFIICWLPFHVLTFLDAL. Asp279 contacts angiotensin II. The Extracellular segment spans residues 282-294; that stretch reads TWMGIINSCEVIA. The helical transmembrane segment at 295–320 threads the bilayer; the sequence is VIDLALPFAILLGFTNSCVNPFLYCF. Asp297 lines the angiotensin II pocket. Topologically, residues 321 to 363 are cytoplasmic; sequence VGNRFQQKLRSVFRVPITWLQGKRETMSCRKGSSLREMDTFVS. Positions 324–333 are helix VIII; the sequence is RFQQKLRSVF. Ser354 is modified (phosphoserine; by PKC).

This sequence belongs to the G-protein coupled receptor 1 family. As to quaternary structure, interacts with MTUS1. In terms of tissue distribution, expressed at highest levels in adrenal gland and uterus.

Its subcellular location is the cell membrane. Receptor for angiotensin II, a vasoconstricting peptide. Signals primarily via a non-canonical G-protein- and beta-arrestin independent pathways. Cooperates with MTUS1 to inhibit ERK2 activation and cell proliferation. In Mus musculus (Mouse), this protein is Type-2 angiotensin II receptor.